The sequence spans 111 residues: Transcription and mRNA export factor SUS1 (111 aa).

This sequence belongs to the ENY2 family. As to quaternary structure, component of the nuclear pore complex (NPC)-associated TREX-2 complex (transcription and export complex 2), composed of at least SUS1, SAC3, THP1, SEM1, and CDC31. TREX-2 contains 2 SUS1 chains. The TREX-2 complex interacts with the nucleoporin NUP1. Component of the 1.8 MDa SAGA transcription coactivator-HAT complex. SAGA is built of 5 distinct domains with specialized functions. Within the SAGA complex, SUS1, SGF11, SGF73 and UBP8 form an additional subcomplex of SAGA called the DUB module (deubiquitination module). Interacts directly with THP1, SAC3, SGF11, and with the RNA polymerase II.

It localises to the nucleus. Its subcellular location is the nucleoplasm. The protein localises to the cytoplasm. The protein resides in the P-body. Its function is as follows. Involved in mRNA export coupled transcription activation by association with both the TREX-2 and the SAGA complexes. At the promoters, SAGA is required for recruitment of the basal transcription machinery. It influences RNA polymerase II transcriptional activity through different activities such as TBP interaction and promoter selectivity, interaction with transcription activators, and chromatin modification through histone acetylation and deubiquitination. Within the SAGA complex, participates in a subcomplex required for deubiquitination of H2B and for the maintenance of steady-state H3 methylation levels. The TREX-2 complex functions in docking export-competent ribonucleoprotein particles (mRNPs) to the nuclear entrance of the nuclear pore complex (nuclear basket). TREX-2 participates in mRNA export and accurate chromatin positioning in the nucleus by tethering genes to the nuclear periphery. May also be involved in cytoplasmic mRNA decay by interaction with components of P-bodies. The chain is Transcription and mRNA export factor SUS1 from Lodderomyces elongisporus (strain ATCC 11503 / CBS 2605 / JCM 1781 / NBRC 1676 / NRRL YB-4239) (Yeast).